A 583-amino-acid chain; its full sequence is Arginine--tRNA ligase (583 aa).

The 'HIGH' region motif lies at 131 to 141 (ANPTGPMHVGH).

This sequence belongs to the class-I aminoacyl-tRNA synthetase family. In terms of assembly, monomer.

It is found in the cytoplasm. It catalyses the reaction tRNA(Arg) + L-arginine + ATP = L-arginyl-tRNA(Arg) + AMP + diphosphate. The chain is Arginine--tRNA ligase from Parvibaculum lavamentivorans (strain DS-1 / DSM 13023 / NCIMB 13966).